Reading from the N-terminus, the 264-residue chain is Ribosomal protein L11 methyltransferase (264 aa).

S-adenosyl-L-methionine-binding residues include threonine 116, glycine 137, aspartate 159, and asparagine 200.

It belongs to the methyltransferase superfamily. PrmA family.

The protein resides in the cytoplasm. The catalysed reaction is L-lysyl-[protein] + 3 S-adenosyl-L-methionine = N(6),N(6),N(6)-trimethyl-L-lysyl-[protein] + 3 S-adenosyl-L-homocysteine + 3 H(+). In terms of biological role, methylates ribosomal protein L11. This Thermotoga neapolitana protein is Ribosomal protein L11 methyltransferase.